Consider the following 87-residue polypeptide: MSASADSLGAAAALDKYGDEDIFSLLIRYGLYVGALFQFVCISAAVLMENNPDGQSNPESGEVTEREGEPVRTRLHKIRKLEKKKRR.

Residues 25–47 traverse the membrane as a helical segment; the sequence is LLIRYGLYVGALFQFVCISAAVL. Positions 51 to 87 are disordered; that stretch reads NPDGQSNPESGEVTEREGEPVRTRLHKIRKLEKKKRR. A compositionally biased stretch (basic and acidic residues) spans 63–72; it reads VTEREGEPVR. The span at 73 to 87 shows a compositional bias: basic residues; that stretch reads TRLHKIRKLEKKKRR.

The protein belongs to the UPF0239 family.

The protein localises to the membrane. The chain is Protein anon-73B1 (anon-73B1) from Drosophila melanogaster (Fruit fly).